A 217-amino-acid chain; its full sequence is Serine acetyltransferase (217 aa).

It belongs to the transferase hexapeptide repeat family.

The protein localises to the cytoplasm. It catalyses the reaction L-serine + acetyl-CoA = O-acetyl-L-serine + CoA. It functions in the pathway amino-acid biosynthesis; L-cysteine biosynthesis; L-cysteine from L-serine: step 1/2. Its activity is regulated as follows. Inhibited by cysteine. Catalyzes the acetylation of serine by acetyl-CoA to produce O-acetylserine (OAS). This chain is Serine acetyltransferase (cysE), found in Bacillus subtilis (strain 168).